Here is a 330-residue protein sequence, read N- to C-terminus: uncharacterized protein (330 aa).

Residues 96-256 form the JmjC domain; it reads AALEFDFTDL…LMLAALRKKL (161 aa). Fe cation is bound by residues His145, Asp147, and His224.

Belongs to the ROX family. Fe(2+) serves as cofactor.

This is an uncharacterized protein from Bacillus subtilis (strain 168).